The chain runs to 1175 residues: Beta-agarase AgaO (1175 aa).

The N-terminal stretch at 1–29 (MRLSKSQGILPLAHAVLAAAIAYSTAATA) is a signal peptide. The CBM6 1 domain maps to 32 to 164 (YRLEAEDFTN…QWNLDKMELA (133 aa)). The segment at 169–208 (SSSSSGGGSTSSSSSGGSSSSSGSGSSSSGGSPEEGGHVS) is disordered. The span at 178 to 200 (TSSSSSGGSSSSSGSGSSSSGGS) shows a compositional bias: low complexity. The 129-residue stretch at 211-339 (FKLEAESAHH…QFNIDYVIFE (129 aa)) folds into the CBM6 2 domain. The disordered stretch occupies residues 355 to 481 (IADVNDSCPG…ESGCSPSQVA (127 aa)). Residues 382-393 (DTDKDGIADNRD) show a composition bias toward basic and acidic residues. The segment covering 471–481 (NESGCSPSQVA) has biased composition (polar residues). The active-site Proton donor is the glutamate 661. The active-site Nucleophile is the glutamate 832.

It belongs to the glycosyl hydrolase 86 family.

It catalyses the reaction Hydrolysis of (1-&gt;4)-beta-D-galactosidic linkages in agarose, giving the tetramer as the predominant product.. Activity and stability are strongly enhanced by CaCl(2). Activity is not affected by sulfhydryl inhibitors such as iodoacetoamide and p-chloromercuribenzoate or by thiol reagents such as dithiothreitol and 2-mercaptoethanol. Strongly inhibited by N-bromosuccinimide and sodium dodecyl sulfate. Functionally, endo-type beta-agarase, which degrades agarose and agarose oligosaccharides more polymerized than hexamers to yield neoagarohexaose (NA6) as the main product, with lesser amounts of neoagarotetraose (NA4) and neoagarobiose (NA2). This is Beta-agarase AgaO from Microbulbifer thermotolerans.